A 567-amino-acid polypeptide reads, in one-letter code: uncharacterized protein (567 aa).

Positions 1 to 26 (MPSEKATTRHLPGAVETLSPRTGRRP) are disordered. 6 helical membrane-spanning segments follow: residues 57 to 77 (AILVTNVIGLIVGAMLLTVAF), 90 to 110 (VSFGIVPGYCVLAFILGTYWL), 142 to 162 (VALAVLFLWGAAAALWTIIYG), 173 to 193 (LFSMGVIGVVAATSCYLLTEF), 221 to 241 (MLVWLLCSGVPNVGVALTAIF), and 257 to 277 (VLILWAPLLIFGFILMWILAW). One can recognise an HAMP domain in the interval 277-329 (WLTATPVRVVREALNRVEQGDLSGDLVVFDGTELGELQRGFNRMVEGLRERER). In terms of domain architecture, Guanylate cyclase spans 361-485 (AVVFVDIVGS…EPVNEAARLC (125 aa)).

This sequence belongs to the adenylyl cyclase class-3 family.

The protein resides in the cell membrane. This is an uncharacterized protein from Mycobacterium bovis (strain ATCC BAA-935 / AF2122/97).